Here is a 167-residue protein sequence, read N- to C-terminus: Photosystem I assembly protein Ycf3 (167 aa).

3 TPR repeats span residues 35 to 68 (AFAY…EVDA), 72 to 105 (SYIL…NPSL), and 120 to 153 (GEQA…APTN).

This sequence belongs to the Ycf3 family.

It is found in the plastid. Its subcellular location is the chloroplast thylakoid membrane. In terms of biological role, essential for the assembly of the photosystem I (PSI) complex. May act as a chaperone-like factor to guide the assembly of the PSI subunits. The protein is Photosystem I assembly protein Ycf3 of Stigeoclonium helveticum (Green alga).